Here is a 322-residue protein sequence, read N- to C-terminus: GDSL esterase/lipase At5g03600 (322 aa).

Serine 21 (nucleophile) is an active-site residue. Catalysis depends on residues aspartate 295 and histidine 298.

Belongs to the 'GDSL' lipolytic enzyme family.

The protein is GDSL esterase/lipase At5g03600 of Arabidopsis thaliana (Mouse-ear cress).